The chain runs to 2199 residues: DNA polymerase epsilon catalytic subunit A (2199 aa).

Positions 2069, 2072, 2104, and 2107 each coordinate Zn(2+). The segment at 2069–2107 (CKQCGVHQDFDLCLHEHLWPTRDDMGTLVFSDGWSCSSC) adopts a CysA-type zinc-finger fold. The [4Fe-4S] cluster site is built by Cys2138, Cys2141, Cys2153, and Cys2155. The CysB motif signature appears at 2138–2155 (CSKCKTVKQWSLKERCSC).

The protein belongs to the DNA polymerase type-B family. As to quaternary structure, heterotetramer. Consists of 4 subunits: pol2, dpb2, dpb3 and dpb4. The cofactor is [4Fe-4S] cluster.

Its subcellular location is the nucleus. It carries out the reaction DNA(n) + a 2'-deoxyribonucleoside 5'-triphosphate = DNA(n+1) + diphosphate. Its function is as follows. DNA polymerase II participates in chromosomal DNA replication. The polypeptide is DNA polymerase epsilon catalytic subunit A (pol2) (Schizosaccharomyces pombe (strain 972 / ATCC 24843) (Fission yeast)).